Here is a 203-residue protein sequence, read N- to C-terminus: Thymidylate kinase (203 aa).

Residue 10 to 17 participates in ATP binding; the sequence is GIDGSGKS.

The protein belongs to the thymidylate kinase family.

It carries out the reaction dTMP + ATP = dTDP + ADP. Phosphorylation of dTMP to form dTDP in both de novo and salvage pathways of dTTP synthesis. This is Thymidylate kinase from Brachyspira hyodysenteriae (strain ATCC 49526 / WA1).